A 439-amino-acid polypeptide reads, in one-letter code: Lipoyl synthase, mitochondrial (439 aa).

A mitochondrion-targeting transit peptide spans 1 to 37; it reads MVASARGLRTLHSAHSSISALPASTVPRLQLAVSRCY. C150, C155, C161, C181, C185, C188, and S396 together coordinate [4Fe-4S] cluster. A Radical SAM core domain is found at 164 to 385; sequence GSSKSAATAT…KERALEMGFL (222 aa).

It belongs to the radical SAM superfamily. Lipoyl synthase family. It depends on [4Fe-4S] cluster as a cofactor.

The protein localises to the mitochondrion. The catalysed reaction is [[Fe-S] cluster scaffold protein carrying a second [4Fe-4S](2+) cluster] + N(6)-octanoyl-L-lysyl-[protein] + 2 oxidized [2Fe-2S]-[ferredoxin] + 2 S-adenosyl-L-methionine + 4 H(+) = [[Fe-S] cluster scaffold protein] + N(6)-[(R)-dihydrolipoyl]-L-lysyl-[protein] + 4 Fe(3+) + 2 hydrogen sulfide + 2 5'-deoxyadenosine + 2 L-methionine + 2 reduced [2Fe-2S]-[ferredoxin]. It participates in protein modification; protein lipoylation via endogenous pathway; protein N(6)-(lipoyl)lysine from octanoyl-[acyl-carrier-protein]: step 2/2. Its function is as follows. Catalyzes the radical-mediated insertion of two sulfur atoms into the C-6 and C-8 positions of the octanoyl moiety bound to the lipoyl domains of lipoate-dependent enzymes, thereby converting the octanoylated domains into lipoylated derivatives. The protein is Lipoyl synthase, mitochondrial of Paracoccidioides lutzii (strain ATCC MYA-826 / Pb01) (Paracoccidioides brasiliensis).